Reading from the N-terminus, the 1022-residue chain is Histone-lysine N-methyltransferase TRX1 (1022 aa).

The disordered stretch occupies residues 31 to 151; the sequence is SSAPCPLPKK…QRQGVHKEAA (121 aa). Over residues 65–78 the composition is skewed to pro residues; it reads EGPPPSPATAPPML. The segment covering 127 to 139 has biased composition (basic and acidic residues); it reads GGAERRGYFSEPK. The 64-residue stretch at 264-327 folds into the PWWP domain; that stretch reads PGDLVWAKLT…LKQAVPFLNG (64 aa). The span at 367–393 shows a compositional bias: basic and acidic residues; that stretch reads SMEKGSSDANSNKDVHSCDNLSEDKTA. The tract at residues 367-399 is disordered; that stretch reads SMEKGSSDANSNKDVHSCDNLSEDKTAESGGDY. An FYR N-terminal domain is found at 402 to 461; it reads MTPIELGNLRVSKLGRIVTDSDYFHNKKHIWPEGYTAFRKFRSVKDPHVVILYKMEVLRN. Residues 465-548 enclose the FYR C-terminal domain; that stretch reads KARPLFRVTS…SCLKYFENAG (84 aa). The segment at 553–609 adopts a Phorbol-ester/DAG-type zinc-finger fold; it reads GYRAVHVNWKDLDYCSVCDMDEEYEDNLFLQCDKCRMMVHARCYGELEPLNGVLWLC. 2 PHD-type zinc fingers span residues 564-615 and 677-744; these read LDYC…CRPE and LLCS…KKHR. Residues 620-744 form an extended PHD domain (ePHD) region; the sequence is SPRCCLCPVT…RLLSYCKKHR (125 aa). The SET domain maps to 861-979; the sequence is RRLAFGKSRI…PWEELTYDYR (119 aa). Zn(2+) is bound at residue Cys943. Tyr978 contacts S-adenosyl-L-methionine. A Post-SET domain is found at 985–1001; the sequence is QRLPCYCGFPKCRGVVN. The Zn(2+) site is built by Cys989, Cys991, and Cys996.

It belongs to the class V-like SAM-binding methyltransferase superfamily. Histone-lysine methyltransferase family. TRX/MLL subfamily. As to quaternary structure, interacts with EHD3. As to expression, expressed in leaf blades and panicles.

It localises to the nucleus. The catalysed reaction is L-lysyl(4)-[histone H3] + S-adenosyl-L-methionine = N(6)-methyl-L-lysyl(4)-[histone H3] + S-adenosyl-L-homocysteine + H(+). Functionally, possesses histone H3 methyltransferase activity in vitro. Methylates 'Lys-4' of histone H3. H3 'Lys-4' methylation represents a specific tag for epigenetic transcriptional activation. Functions as a receptor for the lipid messenger phosphatidylinositol 5-phosphate (PI5P), which negatively regulates its transcriptional activation activity. Involved in the regulation of flowering time and floral induction under long day (LD) conditions. Acts as an activator of flowering under LD conditions. May function through binding to EHD3, a repressor of GHD7. The chain is Histone-lysine N-methyltransferase TRX1 from Oryza sativa subsp. japonica (Rice).